Here is a 152-residue protein sequence, read N- to C-terminus: Large ribosomal subunit protein bL9 (152 aa).

This sequence belongs to the bacterial ribosomal protein bL9 family.

In terms of biological role, binds to the 23S rRNA. This chain is Large ribosomal subunit protein bL9, found in Thermosynechococcus vestitus (strain NIES-2133 / IAM M-273 / BP-1).